The sequence spans 699 residues: tRNA wybutosine-synthesizing protein 4 (699 aa).

S-adenosyl-L-methionine-binding positions include Arg-94, Gly-120, Asp-151, 197-198 (DL), and Glu-224.

The protein belongs to the methyltransferase superfamily. LCMT family.

It carries out the reaction 7-[(3S)-3-amino-3-carboxypropyl]wyosine(37) in tRNA(Phe) + S-adenosyl-L-methionine = 7-[(3S)-(3-amino-3-methoxycarbonyl)propyl]wyosine(37) in tRNA(Phe) + S-adenosyl-L-homocysteine. The enzyme catalyses 7-[(3S)-(3-amino-3-methoxycarbonyl)propyl]wyosine(37) in tRNA(Phe) + S-adenosyl-L-methionine + CO2 = wybutosine(37) in tRNA(Phe) + S-adenosyl-L-homocysteine + 2 H(+). It functions in the pathway tRNA modification; wybutosine-tRNA(Phe) biosynthesis. In terms of biological role, probable S-adenosyl-L-methionine-dependent methyltransferase that acts as a component of the wybutosine biosynthesis pathway. Wybutosine is a hyper modified guanosine with a tricyclic base found at the 3'-position adjacent to the anticodon of eukaryotic phenylalanine tRNA. May methylate the carboxyl group of leucine residues to form alpha-leucine ester residues. The protein is tRNA wybutosine-synthesizing protein 4 (PPM2) of Eremothecium gossypii (strain ATCC 10895 / CBS 109.51 / FGSC 9923 / NRRL Y-1056) (Yeast).